The chain runs to 377 residues: Succinyl-diaminopimelate desuccinylase (377 aa).

Histidine 66 is a binding site for Zn(2+). Aspartate 68 is a catalytic residue. Aspartate 99 serves as a coordination point for Zn(2+). Residue glutamate 133 is the Proton acceptor of the active site. Residues glutamate 134, glutamate 162, and histidine 348 each contribute to the Zn(2+) site.

The protein belongs to the peptidase M20A family. DapE subfamily. As to quaternary structure, homodimer. Requires Zn(2+) as cofactor. It depends on Co(2+) as a cofactor.

It catalyses the reaction N-succinyl-(2S,6S)-2,6-diaminopimelate + H2O = (2S,6S)-2,6-diaminopimelate + succinate. It participates in amino-acid biosynthesis; L-lysine biosynthesis via DAP pathway; LL-2,6-diaminopimelate from (S)-tetrahydrodipicolinate (succinylase route): step 3/3. Catalyzes the hydrolysis of N-succinyl-L,L-diaminopimelic acid (SDAP), forming succinate and LL-2,6-diaminopimelate (DAP), an intermediate involved in the bacterial biosynthesis of lysine and meso-diaminopimelic acid, an essential component of bacterial cell walls. In Bordetella avium (strain 197N), this protein is Succinyl-diaminopimelate desuccinylase.